A 459-amino-acid polypeptide reads, in one-letter code: UDP-N-acetylmuramate--L-alanine ligase (459 aa).

118-124 (GTHGKTT) contributes to the ATP binding site.

The protein belongs to the MurCDEF family.

The protein resides in the cytoplasm. It catalyses the reaction UDP-N-acetyl-alpha-D-muramate + L-alanine + ATP = UDP-N-acetyl-alpha-D-muramoyl-L-alanine + ADP + phosphate + H(+). It functions in the pathway cell wall biogenesis; peptidoglycan biosynthesis. Its function is as follows. Cell wall formation. This is UDP-N-acetylmuramate--L-alanine ligase from Agathobacter rectalis (strain ATCC 33656 / DSM 3377 / JCM 17463 / KCTC 5835 / VPI 0990) (Eubacterium rectale).